A 221-amino-acid chain; its full sequence is Protein lethal(2)k10201 (221 aa).

2 consecutive C2H2-type zinc fingers follow at residues 74 to 97 (YSCVECRKMLPTAHLLDLHITEQH) and 113 to 138 (FSCFLEECTIKFHTARQRKDHCIITH). The interval 146 to 168 (FDHSKNRGKQKHQGKSKPNSMEV) is disordered. A compositionally biased stretch (basic residues) spans 151–160 (NRGKQKHQGK).

Its function is as follows. Vital for development. This Drosophila melanogaster (Fruit fly) protein is Protein lethal(2)k10201 (l(2)k10201).